A 144-amino-acid polypeptide reads, in one-letter code: Large ribosomal subunit protein uL13 (144 aa).

It belongs to the universal ribosomal protein uL13 family. As to quaternary structure, part of the 50S ribosomal subunit.

Its function is as follows. This protein is one of the early assembly proteins of the 50S ribosomal subunit, although it is not seen to bind rRNA by itself. It is important during the early stages of 50S assembly. In Ruminiclostridium cellulolyticum (strain ATCC 35319 / DSM 5812 / JCM 6584 / H10) (Clostridium cellulolyticum), this protein is Large ribosomal subunit protein uL13.